A 359-amino-acid chain; its full sequence is Peptide chain release factor 1 (359 aa).

Glutamine 235 is subject to N5-methylglutamine. Residues 283-294 (SKADEERSESRK) are compositionally biased toward basic and acidic residues. A disordered region spans residues 283–309 (SKADEERSESRKSQVGSGDRSERIRTY).

This sequence belongs to the prokaryotic/mitochondrial release factor family. Post-translationally, methylated by PrmC. Methylation increases the termination efficiency of RF1.

It is found in the cytoplasm. Functionally, peptide chain release factor 1 directs the termination of translation in response to the peptide chain termination codons UAG and UAA. This chain is Peptide chain release factor 1, found in Mesorhizobium japonicum (strain LMG 29417 / CECT 9101 / MAFF 303099) (Mesorhizobium loti (strain MAFF 303099)).